We begin with the raw amino-acid sequence, 219 residues long: Holliday junction branch migration complex subunit RuvA (219 aa).

The tract at residues 1–67 (MIGWLRGERI…DDGSSLFGFP (67 aa)) is domain I. The interval 68–146 (DRRERDLFRV…AWSAEKNSDH (79 aa)) is domain II. A flexible linker region spans residues 147–161 (SDLSLVDRSDLKSLP). Residues 162 to 219 (IEPDPLQDLQLTLSTLGYEDLEIRRAMRAVATGEEVPAANDGDGWLRASLRWLNRPSA) form a domain III region.

It belongs to the RuvA family. In terms of assembly, homotetramer. Forms an RuvA(8)-RuvB(12)-Holliday junction (HJ) complex. HJ DNA is sandwiched between 2 RuvA tetramers; dsDNA enters through RuvA and exits via RuvB. An RuvB hexamer assembles on each DNA strand where it exits the tetramer. Each RuvB hexamer is contacted by two RuvA subunits (via domain III) on 2 adjacent RuvB subunits; this complex drives branch migration. In the full resolvosome a probable DNA-RuvA(4)-RuvB(12)-RuvC(2) complex forms which resolves the HJ.

The protein resides in the cytoplasm. Functionally, the RuvA-RuvB-RuvC complex processes Holliday junction (HJ) DNA during genetic recombination and DNA repair, while the RuvA-RuvB complex plays an important role in the rescue of blocked DNA replication forks via replication fork reversal (RFR). RuvA specifically binds to HJ cruciform DNA, conferring on it an open structure. The RuvB hexamer acts as an ATP-dependent pump, pulling dsDNA into and through the RuvAB complex. HJ branch migration allows RuvC to scan DNA until it finds its consensus sequence, where it cleaves and resolves the cruciform DNA. This chain is Holliday junction branch migration complex subunit RuvA, found in Synechococcus sp. (strain CC9311).